Reading from the N-terminus, the 305-residue chain is tRNA-cytidine(32) 2-sulfurtransferase (305 aa).

The tract at residues 1-20 is disordered; sequence MTAVLPLPHPLADPAPRDPR. A PP-loop motif motif is present at residues 59 to 64; that stretch reads SGGKDS. The [4Fe-4S] cluster site is built by Cys134, Cys137, and Cys225. The segment covering 282-293 has biased composition (low complexity); sequence DAPPDLAPDPGA. Residues 282 to 305 form a disordered region; sequence DAPPDLAPDPGAWLTASDATHDSD.

The protein belongs to the TtcA family. Homodimer. It depends on Mg(2+) as a cofactor. [4Fe-4S] cluster serves as cofactor.

The protein resides in the cytoplasm. The catalysed reaction is cytidine(32) in tRNA + S-sulfanyl-L-cysteinyl-[cysteine desulfurase] + AH2 + ATP = 2-thiocytidine(32) in tRNA + L-cysteinyl-[cysteine desulfurase] + A + AMP + diphosphate + H(+). Its pathway is tRNA modification. In terms of biological role, catalyzes the ATP-dependent 2-thiolation of cytidine in position 32 of tRNA, to form 2-thiocytidine (s(2)C32). The sulfur atoms are provided by the cysteine/cysteine desulfurase (IscS) system. This Xanthomonas oryzae pv. oryzae (strain MAFF 311018) protein is tRNA-cytidine(32) 2-sulfurtransferase.